The primary structure comprises 522 residues: Sorting nexin-1 (522 aa).

The segment at 1–142 is disordered; sequence MASGGGGCSA…ELEEEEQEDQ (142 aa). Phosphoserine occurs at positions 32 and 39. The span at 35 to 45 shows a compositional bias: acidic residues; that stretch reads EAGDSDTEGED. Phosphothreonine is present on residues Thr41 and Thr48. Residues 55 to 65 are compositionally biased toward polar residues; the sequence is KPQSPKKTTSL. 2 positions are modified to phosphoserine: Ser58 and Ser72. The segment covering 71-80 has biased composition (basic and acidic residues); sequence GSKENGIHEE. Over residues 98–107 the composition is skewed to polar residues; it reads LDSTQNNQKT. The span at 132–142 shows a compositional bias: acidic residues; the sequence is EELEEEEQEDQ. The region spanning 143-272 is the PX domain; the sequence is FDLTVGITDP…EFLEKEELPR (130 aa). A 1,2-diacyl-sn-glycero-3-phospho-(1D-myo-inositol-3-phosphate)-binding residues include Arg186, Ser188, and Lys214. The residue at position 188 (Ser188) is a Phosphoserine. An N6-acetyllysine modification is found at Lys237. Arg238 provides a ligand contact to a 1,2-diacyl-sn-glycero-3-phospho-(1D-myo-inositol-3-phosphate). Ser280 carries the post-translational modification Phosphoserine. Positions 281-298 are membrane-binding amphipathic helix; sequence GAGLLKMFNKATDAVSKM. One can recognise a BAR domain in the interval 302–522; sequence MNESDIWFEE…AFLPEARAIS (221 aa).

Belongs to the sorting nexin family. Predominantly forms heterodimers with BAR domain-containing sorting nexins SNX5, SNX6 and SNX32; can self-associate to form homodimers. The heterodimers are proposed to self-assemble into helical arrays on the membrane to stabilize and expand local membrane curvature underlying endosomal tubule formation. Thought to be a component of the originally described retromer complex (also called SNX-BAR retromer) which is a pentamer containing the heterotrimeric retromer cargo-selective complex (CSC), also described as vacuolar protein sorting subcomplex (VPS) and a heterodimeric membrane-deforming subcomplex formed between SNX1 or SNX2 and SNX5 or SNX6 (also called SNX-BAR subcomplex); the respective CSC and SNX-BAR subcomplexes associate with low affinity. Interacts with SNX5, SNX6, SNX32, VPS26A, VPS29, VPS35, DRD5, DENND5A, KALRN, RHOG (GDP-bound form). The interaction with SNX2 is reported controversially. Interacts with DNAJC13; prevented by presence of HGS. Interacts with HGS.

The protein resides in the endosome membrane. It localises to the golgi apparatus. It is found in the trans-Golgi network membrane. Its subcellular location is the early endosome membrane. The protein localises to the cell projection. The protein resides in the lamellipodium. Functionally, involved in several stages of intracellular trafficking. Interacts with membranes containing phosphatidylinositol 3-phosphate (PtdIns(3P)) or phosphatidylinositol 3,5-bisphosphate (PtdIns(3,5)P2). Acts in part as component of the retromer membrane-deforming SNX-BAR subcomplex. The SNX-BAR retromer mediates retrograde transport of cargo proteins from endosomes to the trans-Golgi network (TGN) and is involved in endosome-to-plasma membrane transport for cargo protein recycling. The SNX-BAR subcomplex functions to deform the donor membrane into a tubular profile called endosome-to-TGN transport carrier (ETC). Can sense membrane curvature and has in vitro vesicle-to-membrane remodeling activity. Involved in retrograde endosome-to-TGN transport of lysosomal enzyme receptors (IGF2R, M6PR and SORT1). Plays a role in targeting ligand-activated EGFR to the lysosomes for degradation after endocytosis from the cell surface and release from the Golgi. Involvement in retromer-independent endocytic trafficking of P2RY1 and lysosomal degradation of protease-activated receptor-1/F2R. Promotes KALRN- and RHOG-dependent but retromer-independent membrane remodeling such as lamellipodium formation; the function is dependent on GEF activity of KALRN. Required for endocytosis of DRD5 upon agonist stimulation but not for basal receptor trafficking. The chain is Sorting nexin-1 (Snx1) from Rattus norvegicus (Rat).